The following is a 267-amino-acid chain: 5'-methylthioadenosine nucleosidase (267 aa).

E38 acts as the Proton acceptor in catalysis. Residues T116, 199–202 (KDME), and D225 contribute to the S-methyl-5'-thioadenosine site. Residues K199 and D225 each coordinate adenine. D225 functions as the Proton donor in the catalytic mechanism.

The protein belongs to the PNP/UDP phosphorylase family. MtnN subfamily. Homodimer. Interacts with CBL3 in a calcium-dependent manner. Expressed in roots, leaves, stems, cauline leaves and flowers.

The enzyme catalyses S-methyl-5'-thioadenosine + H2O = 5-(methylsulfanyl)-D-ribose + adenine. Its pathway is amino-acid biosynthesis; L-methionine biosynthesis via salvage pathway; S-methyl-5-thio-alpha-D-ribose 1-phosphate from S-methyl-5'-thioadenosine (hydrolase route): step 1/2. Inhibited by CBL3 in a calcium-dependent manner. Inhibited by 5'-methylthiotubercidin (MTT) and by formycin A (FMA). Enzyme of the methionine cycle that catalyzes the irreversible cleavage of the glycosidic bond in 5'-methylthioadenosine (MTA) to adenine and 5'-methylthioribose. Contributes to the maintenance of AdoMet homeostasis and is required to sustain high rates of ethylene synthesis. Inactive towards S-adenosylhomocysteine (SAH/AdoHcy). This Arabidopsis thaliana (Mouse-ear cress) protein is 5'-methylthioadenosine nucleosidase (MTN1).